The sequence spans 24 residues: Arginine attenuator peptide (24 aa).

Belongs to the arginine attenuator peptide family.

Functionally, arginine attenuator peptide (AAP) that has a regulatory role in the production of arginine-specific carbamoyl phosphate synthetase. Encoded by an upstream open reading frame (uORF) within the 5'-leader region of arginine-specific carbamoyl phosphate synthetase small chain (arg-2) mRNA, it attenuates the translation of the downstream arg-2 ORF. In the presence of high concentrations of arginine, ribosomes translating the uORF encoding AAP stall at the termination codon, resulting in reduced translation from the downstream arg-2 initiation codon. This Neurospora crassa (strain ATCC 24698 / 74-OR23-1A / CBS 708.71 / DSM 1257 / FGSC 987) protein is Arginine attenuator peptide.